Here is a 126-residue protein sequence, read N- to C-terminus: Small ribosomal subunit protein uS12 (126 aa).

The segment at 1–28 (MPTINQLVRKGRQSETTKSKSPALQDCP) is disordered. A 3-methylthioaspartic acid modification is found at D89. Residues 103–126 (DTQGVKDRKQARSKYGAKRAKAAK) are disordered. Positions 113 to 126 (ARSKYGAKRAKAAK) are enriched in basic residues.

Belongs to the universal ribosomal protein uS12 family. Part of the 30S ribosomal subunit. Contacts proteins S8 and S17. May interact with IF1 in the 30S initiation complex.

In terms of biological role, with S4 and S5 plays an important role in translational accuracy. Interacts with and stabilizes bases of the 16S rRNA that are involved in tRNA selection in the A site and with the mRNA backbone. Located at the interface of the 30S and 50S subunits, it traverses the body of the 30S subunit contacting proteins on the other side and probably holding the rRNA structure together. The combined cluster of proteins S8, S12 and S17 appears to hold together the shoulder and platform of the 30S subunit. The chain is Small ribosomal subunit protein uS12 from Burkholderia orbicola (strain MC0-3).